A 27-amino-acid polypeptide reads, in one-letter code: Trypsin inhibitor 5 (27 aa).

3 cysteine pairs are disulfide-bonded: Cys1-Cys18, Cys8-Cys20, and Cys14-Cys26.

The protein localises to the secreted. Its function is as follows. Inhibits trypsin. This chain is Trypsin inhibitor 5, found in Sechium edule (Chayote).